A 372-amino-acid chain; its full sequence is UDP-N-acetylenolpyruvoylglucosamine reductase (372 aa).

Residues 29–205 enclose the FAD-binding PCMH-type domain; the sequence is VGPTARRLIT…LEVEFALDAS (177 aa). The active site involves R177. The Proton donor role is filled by S260. Residue E364 is part of the active site.

The protein belongs to the MurB family. FAD is required as a cofactor.

It is found in the cytoplasm. It catalyses the reaction UDP-N-acetyl-alpha-D-muramate + NADP(+) = UDP-N-acetyl-3-O-(1-carboxyvinyl)-alpha-D-glucosamine + NADPH + H(+). It functions in the pathway cell wall biogenesis; peptidoglycan biosynthesis. Its function is as follows. Cell wall formation. The sequence is that of UDP-N-acetylenolpyruvoylglucosamine reductase from Mycobacterium avium (strain 104).